The following is a 66-amino-acid chain: Large ribosomal subunit protein uL29 (66 aa).

This sequence belongs to the universal ribosomal protein uL29 family.

This is Large ribosomal subunit protein uL29 from Rhizobium leguminosarum bv. trifolii (strain WSM2304).